Here is an 879-residue protein sequence, read N- to C-terminus: Phosphoenolpyruvate carboxylase (879 aa).

Residues H138 and K546 contribute to the active site.

Belongs to the PEPCase type 1 family. Requires Mg(2+) as cofactor.

It carries out the reaction oxaloacetate + phosphate = phosphoenolpyruvate + hydrogencarbonate. In terms of biological role, forms oxaloacetate, a four-carbon dicarboxylic acid source for the tricarboxylic acid cycle. The sequence is that of Phosphoenolpyruvate carboxylase from Pectobacterium carotovorum subsp. carotovorum (strain PC1).